The sequence spans 407 residues: Peptidase T (407 aa).

H82 is a Zn(2+) binding site. Residue D84 is part of the active site. D143 contributes to the Zn(2+) binding site. E177 functions as the Proton acceptor in the catalytic mechanism. Zn(2+)-binding residues include E178, D200, and H382.

This sequence belongs to the peptidase M20B family. Zn(2+) serves as cofactor.

The protein resides in the cytoplasm. It catalyses the reaction Release of the N-terminal residue from a tripeptide.. Cleaves the N-terminal amino acid of tripeptides. The sequence is that of Peptidase T from Streptococcus pyogenes serotype M3 (strain ATCC BAA-595 / MGAS315).